The primary structure comprises 517 residues: Bifunctional purine biosynthesis protein PurH (517 aa).

An MGS-like domain is found at 1 to 145 (MSPLALVSVS…KNHKDVSVLV (145 aa)).

Belongs to the PurH family.

It catalyses the reaction (6R)-10-formyltetrahydrofolate + 5-amino-1-(5-phospho-beta-D-ribosyl)imidazole-4-carboxamide = 5-formamido-1-(5-phospho-D-ribosyl)imidazole-4-carboxamide + (6S)-5,6,7,8-tetrahydrofolate. The catalysed reaction is IMP + H2O = 5-formamido-1-(5-phospho-D-ribosyl)imidazole-4-carboxamide. Its pathway is purine metabolism; IMP biosynthesis via de novo pathway; 5-formamido-1-(5-phospho-D-ribosyl)imidazole-4-carboxamide from 5-amino-1-(5-phospho-D-ribosyl)imidazole-4-carboxamide (10-formyl THF route): step 1/1. It functions in the pathway purine metabolism; IMP biosynthesis via de novo pathway; IMP from 5-formamido-1-(5-phospho-D-ribosyl)imidazole-4-carboxamide: step 1/1. The polypeptide is Bifunctional purine biosynthesis protein PurH (Prochlorococcus marinus (strain MIT 9301)).